The sequence spans 1297 residues: MRILRGSPALSEFRVNKLLELCREQDLPVTGIYAEFMHFADLTSELDAEALEKLEKLLTYGPTIEEHEPQGLLLLVTPRPGTISPWSSKATDIAQNCGLNAVKRLERGTAYYVESSSELSSVQIDIVKSIIHDRMMEAVFGDLEAAAALFSVAQPAPMTQVDILSGGRLALEEANVSLGLALAEDEIDYLVENFTKLGRNPNDIELMMFAQANSEHCRHKIFNADWTIDGVEQPKSLFKMIKNTFETTPDHVLSAYKDNAAVMTGSKVGRFFPDPETRQYNYHHEDAHILMKVETHNHPTAISPWPGASTGSGGEIRDEGATGIGGKPKAGLVGFTTSNLRIPGFEQPWETDFGKPGRIVNALDIMLEGPLGGAAFNNEFGRPNLLGYFRTYEEKVTSHAGEEVRGYHKPIMIAGGMGNIRDEHVQKKEIPVGASLIVLGGPAMNIGLGGGAASSMASGQSAEDLDFASVQRENPEMERRCQEVIDRCWQLGDNNPIAFIHDVGAGGISNALPELVNDGERGGKFQLRDVPNDEPGMSPLEIWCNESQERYVLAVAPENMAAFDAICKRERAPYAVVGVATEERHLTLEDAHFDNTPIDMPMDILLGKPPKMHREATTLKVDSPAMTRDGIELNEAVDRVLRLPTVAEKTFLITIGDRTVTGLVARDQMVGPWQVPVANCAVTAASYDTYHGEAMSMGERTPVALLDFGASARLAVGESLTNIAATDIGDIKRIKLSANWMSPAGHPGEDAGLYEAVKAVGEELCPALGLTIPVGKDSMSMKTKWNENGEEKEVTSPLSLIITAFARVEDVRKTITPQLRTDKGETSLVLVDLGNGKNRLGATALAQVYKQLGDKPADVDNAEQLKGFFDAMQALVRQDKLLAYHDKGDGGLLVTLAEMAFAGHCGVNANIAALGDDVLAALFNEELGAVVQVKNDELDSVLSTLAANGLEACSHVIGAIDASDNFVIRSGDVVVLERSRTDLRVIWAETTHKMQALRDNPACADQEFEAKKDNSDPGLNVSLSYEVNEDIAAPYIAKGAKPKMAILREQGVNSHVEMAAAFDRAGFEATDIHMSDILTGQAVLDEYHGLVACGGFSYGDVLGAGEGWAKSVLFNAQAREQFQAFFNRENTFSLGVCNGCQMLSNLKELIPGADLWPRFVRNESERFEARFSLVEVQKSDSVFFDGMAGSRMPIAVSHGEGRVEVRDAQHLAAIEASGTVAVRFVDNLGNPTQQYPNNPNGSPNAITGLTTKDGRVTIMMPHPERVFRTVANSWAPEGWGENGAWMRMFQNARKNLA.

Residues Gly307–Asp318 and Ala678 contribute to the ATP site. Mg(2+)-binding residues include Glu718, Asn722, and Asp886. The Glutamine amidotransferase type-1 domain maps to Met1044–Ala1297. The active-site Nucleophile is Cys1137. Residues His1262 and Glu1264 contribute to the active site.

This sequence in the N-terminal section; belongs to the FGAMS family. As to quaternary structure, monomer.

It is found in the cytoplasm. The enzyme catalyses N(2)-formyl-N(1)-(5-phospho-beta-D-ribosyl)glycinamide + L-glutamine + ATP + H2O = 2-formamido-N(1)-(5-O-phospho-beta-D-ribosyl)acetamidine + L-glutamate + ADP + phosphate + H(+). It participates in purine metabolism; IMP biosynthesis via de novo pathway; 5-amino-1-(5-phospho-D-ribosyl)imidazole from N(2)-formyl-N(1)-(5-phospho-D-ribosyl)glycinamide: step 1/2. In terms of biological role, phosphoribosylformylglycinamidine synthase involved in the purines biosynthetic pathway. Catalyzes the ATP-dependent conversion of formylglycinamide ribonucleotide (FGAR) and glutamine to yield formylglycinamidine ribonucleotide (FGAM) and glutamate. The chain is Phosphoribosylformylglycinamidine synthase from Vibrio vulnificus (strain YJ016).